The following is a 369-amino-acid chain: Tyrosinase-like protein orsC (369 aa).

The first 23 residues, 1–23 (MLAFNPLVTALAALIFLFCQANA), serve as a signal peptide directing secretion. 2 residues coordinate Cu cation: His112 and His121. 4 N-linked (GlcNAc...) asparagine glycosylation sites follow: Asn165, Asn179, Asn253, and Asn272. Residue His315 coordinates Cu cation.

It functions in the pathway secondary metabolite biosynthesis. In terms of biological role, tyrosinase-like protein; part of the gene cluster that mediates the biosynthesis of orsellinic acid, as well as of the cathepsin K inhibitors F9775 A and F9775 B. The non-reducing polyketide synthase orsA produces orsellinic acid by condensing acetyl-CoA with 3 malonyl-CoA units. Further modifications by the decarboxylase orsB and the tyrosinase-like protein orsC lead to the production of F9775 A and F9775 B. The functions of orsD and orsE remain unclear since only orsB and orsC are required to convert orsellinic acid into F9775 A and F9775 B. The polypeptide is Tyrosinase-like protein orsC (Emericella nidulans (strain FGSC A4 / ATCC 38163 / CBS 112.46 / NRRL 194 / M139) (Aspergillus nidulans)).